The chain runs to 245 residues: Ribonuclease 3 (245 aa).

One can recognise an RNase III domain in the interval 17-146 (FTDKMKSLGL…FVGALYLDQG (130 aa)). E59 is a Mg(2+) binding site. D63 is an active-site residue. Residues D132 and E135 each coordinate Mg(2+). Residue E135 is part of the active site. Residues 172–241 (DFKTQFQEYV…AEQAYKLMKN (70 aa)) enclose the DRBM domain.

It belongs to the ribonuclease III family. Homodimer. It depends on Mg(2+) as a cofactor.

It is found in the cytoplasm. It catalyses the reaction Endonucleolytic cleavage to 5'-phosphomonoester.. Digests double-stranded RNA. Involved in the processing of primary rRNA transcript to yield the immediate precursors to the large and small rRNAs (23S and 16S). Processes some mRNAs, and tRNAs when they are encoded in the rRNA operon. Processes pre-crRNA and tracrRNA of type II CRISPR loci if present in the organism. The protein is Ribonuclease 3 of Staphylococcus epidermidis (strain ATCC 12228 / FDA PCI 1200).